A 264-amino-acid polypeptide reads, in one-letter code: Undecaprenyl-diphosphatase (264 aa).

8 helical membrane passes run 1 to 21 (MDIV…FLPI), 39 to 59 (QGLA…VFYF), 83 to 103 (STLV…GLAF), 113 to 133 (SGIV…LADK), 143 to 163 (VTIK…IPGV), 181 to 201 (VGSA…AGGL), 220 to 240 (LAAL…MSII), and 244 to 264 (SMTP…FIFV).

The protein belongs to the UppP family.

The protein resides in the cell inner membrane. It catalyses the reaction di-trans,octa-cis-undecaprenyl diphosphate + H2O = di-trans,octa-cis-undecaprenyl phosphate + phosphate + H(+). Its function is as follows. Catalyzes the dephosphorylation of undecaprenyl diphosphate (UPP). Confers resistance to bacitracin. The sequence is that of Undecaprenyl-diphosphatase from Campylobacter curvus (strain 525.92).